We begin with the raw amino-acid sequence, 341 residues long: MIIDDVIIGKGIGDIEFSRENTIFVLIAGTTEVSLRSGITAAGASPEFTRITPTVDAEIIGEGKCLSTADPPMTPEGIPTPAIVSRAILDLTGLRSLIVNGGFSVRPKTAFFETYIEPSRDPGLDRAVMEAERVMEAGRRLGKILDGNFKNIILGESFPGGTTTAYVVLRSLGIDSGTSSSMPVDPDNLKKKVAEESFRRRNVRSPLEAATEYGDNLMIFMIGLAESIRSSKMILGGGTQMANAANLIAKVNGRTDQVVATTQWVFSHRSDLFRILGLEDRSIISVMDFGRMRNNGLRLYNQGHVREGVGMGALYSYARIAGFSREEIESAIDDFYTTFLR.

Belongs to the UPF0284 family.

The sequence is that of UPF0284 protein Ta0078 from Thermoplasma acidophilum (strain ATCC 25905 / DSM 1728 / JCM 9062 / NBRC 15155 / AMRC-C165).